The chain runs to 368 residues: Caffeine synthase 3 (368 aa).

Residue Y23 participates in S-adenosyl-L-homocysteine binding. T30 contributes to the caffeine binding site. S-adenosyl-L-homocysteine contacts are provided by C65, N70, D102, L103, S137, and F138. Residues Y155, H158, and W159 each coordinate caffeine. N176 lines the Mg(2+) pocket. R224 contacts caffeine. Residues D262, F264, and N265 each coordinate Mg(2+). A caffeine-binding site is contributed by F320.

Belongs to the methyltransferase superfamily. Type-7 methyltransferase family. It depends on Mg(2+) as a cofactor.

It catalyses the reaction theobromine + S-adenosyl-L-methionine = caffeine + S-adenosyl-L-homocysteine + H(+). It carries out the reaction 7-methylxanthine + S-adenosyl-L-methionine = theobromine + S-adenosyl-L-homocysteine + H(+). It functions in the pathway alkaloid biosynthesis. Involved in the biosynthesis of caffeine. Catalyzes the conversion of 7-methylxanthine (7mX) to theobromine and of theobromine to caffeine. The sequence is that of Caffeine synthase 3 from Camellia sinensis (Tea plant).